Here is a 125-residue protein sequence, read N- to C-terminus: MKALMLLTLSVLLCWVSADIRCHSCYKVPVLGCVDRQSCRLEPGQQCLTTHAYLGKMWVFSNLRCGTPEEPCQEAFNQTNRKLGLTYNTTCCNKDNCNSAGPRPTPALGLVFLTSLAGLGLWLLH.

Residues 1-18 (MKALMLLTLSVLLCWVSA) form the signal peptide. The region spanning 20–111 (IRCHSCYKVP…PRPTPALGLV (92 aa)) is the UPAR/Ly6 domain. 3 cysteine pairs are disulfide-bonded: Cys-22–Cys-47, Cys-25–Cys-33, and Cys-39–Cys-65. N-linked (GlcNAc...) asparagine glycosylation occurs at Asn-88. Residues Cys-92 and Cys-97 are joined by a disulfide bond. Ser-99 carries GPI-anchor amidated serine lipidation. The propeptide at 100–125 (AGPRPTPALGLVFLTSLAGLGLWLLH) is removed in mature form.

Monomer. N-glycosylated. As to expression, highly expressed at the leading edges of cells, on filopodia.

It is found in the cell membrane. In Homo sapiens (Human), this protein is Lymphocyte antigen 6 complex locus protein G6c (LY6G6C).